Consider the following 1353-residue polypeptide: Trifunctional purine biosynthetic protein adenosine-3 (1353 aa).

Residues 114–321 form the ATP-grasp domain; sequence KDFMLRHGIP…LFDVMEACCS (208 aa). Residues 193–196, Glu200, Arg223, and Asn232 contribute to the ATP site; that span reads EELL. The Mg(2+) site is built by Glu291 and Asn293. An AIRS domain region spans residues 441–1155; that stretch reads GLSYKDSGVD…QKMLSQRRKR (715 aa). A phosphoserine mark is found at Ser814 and Ser816. The interval 1153 to 1353 is GART domain; sequence RKRVAVLISG…ALISPEVSSQ (201 aa). 1164–1166 lines the N(1)-(5-phospho-beta-D-ribosyl)glycinamide pocket; the sequence is GSN. Residues Arg1219, 1244–1247, and Asn1261 each bind (6R)-10-formyltetrahydrofolate; that span reads MRVL. The active-site Proton donor is His1263. 1295–1299 contributes to the (6R)-10-formyltetrahydrofolate binding site; the sequence is DEGVD. Position 1325–1328 (1325–1328) interacts with N(1)-(5-phospho-beta-D-ribosyl)glycinamide; the sequence is HKAE.

This sequence in the N-terminal section; belongs to the GARS family. The protein in the central section; belongs to the AIR synthase family. It in the C-terminal section; belongs to the GART family. Homodimer. It depends on Mg(2+) as a cofactor. Mn(2+) is required as a cofactor.

The catalysed reaction is 5-phospho-beta-D-ribosylamine + glycine + ATP = N(1)-(5-phospho-beta-D-ribosyl)glycinamide + ADP + phosphate + H(+). The enzyme catalyses 2-formamido-N(1)-(5-O-phospho-beta-D-ribosyl)acetamidine + ATP = 5-amino-1-(5-phospho-beta-D-ribosyl)imidazole + ADP + phosphate + H(+). It catalyses the reaction N(1)-(5-phospho-beta-D-ribosyl)glycinamide + (6R)-10-formyltetrahydrofolate = N(2)-formyl-N(1)-(5-phospho-beta-D-ribosyl)glycinamide + (6S)-5,6,7,8-tetrahydrofolate + H(+). Its pathway is purine metabolism; IMP biosynthesis via de novo pathway; 5-amino-1-(5-phospho-D-ribosyl)imidazole from N(2)-formyl-N(1)-(5-phospho-D-ribosyl)glycinamide: step 2/2. It functions in the pathway purine metabolism; IMP biosynthesis via de novo pathway; N(1)-(5-phospho-D-ribosyl)glycinamide from 5-phospho-alpha-D-ribose 1-diphosphate: step 2/2. The protein operates within purine metabolism; IMP biosynthesis via de novo pathway; N(2)-formyl-N(1)-(5-phospho-D-ribosyl)glycinamide from N(1)-(5-phospho-D-ribosyl)glycinamide (10-formyl THF route): step 1/1. Its function is as follows. Trifunctional enzyme that catalyzes three distinct reactions as part of the 'de novo' inosine monophosphate biosynthetic pathway. The chain is Trifunctional purine biosynthetic protein adenosine-3 from Drosophila melanogaster (Fruit fly).